The sequence spans 709 residues: ATP-binding cassette sub-family F member 3 (709 aa).

At A2 the chain carries N-acetylalanine. S83 is modified (phosphoserine). The segment covering 129 to 143 has biased composition (basic and acidic residues); it reads RLKAKQEKRSEKDTL. The segment at 129-171 is disordered; that stretch reads RLKAKQEKRSEKDTLKTSNPLVLEEASASQAGSRKESRLESSG. A phosphoserine mark is found at S155, S157, and S161. The span at 161-171 shows a compositional bias: basic and acidic residues; that stretch reads SRKESRLESSG. 2 consecutive ABC transporter domains span residues 178–424 and 492–707; these read VRIE…LNQQ and LQLD…RREG. 210-217 provides a ligand contact to ATP; the sequence is GRNGLGKT. Phosphoserine is present on S283. ATP is bound at residue 525–532; that stretch reads GENGAGKS.

This sequence belongs to the ABC transporter superfamily. ABCF family. EF3 subfamily.

Its function is as follows. Displays an antiviral effect against flaviviruses in the presence of OAS1B. The chain is ATP-binding cassette sub-family F member 3 (ABCF3) from Pongo abelii (Sumatran orangutan).